The chain runs to 1598 residues: Mushroom body large-type Kenyon cell-specific protein 1 (1598 aa).

Disordered regions lie at residues 83-105 (PGNL…SLPA), 140-387 (RHHH…SDGI), 436-462 (PHDD…PMSV), and 495-525 (PLVG…SQDN). The segment covering 140 to 151 (RHHHLQNHHHHL) has biased composition (basic residues). A compositionally biased stretch (low complexity) spans 164–174 (QQQQQQQQRQQ). Basic and acidic residues predominate over residues 175 to 191 (QRQEERRLRPDEIKVEV). Residues 210–263 (STDASTPATVTTTGATTTLPAASATGTGPATPSAVVATSNATAAMTTGTTTIPT) are compositionally biased toward low complexity. Positions 275 to 291 (EGADDRDDDEENEEEED) are enriched in acidic residues. Composition is skewed to basic and acidic residues over residues 292–305 (GRGQ…LKLD), 315–324 (LRREKDRGSR), and 335–346 (DGTKERTEEVAL). The residue at position 444 (S444) is a Phosphoserine; by MAPK. Residues 445–461 (PQSDSSSSSRSAESPMS) are compositionally biased toward low complexity. Residues 582 to 634 (VGAGGGRRAYTEEELQAALRDIQSGKLGTRRAAVIYGIPRSTLRNKVYKLAME) form the HTH psq-type 1 domain. A DNA-binding region (H-T-H motif) is located at residues 610 to 630 (TRRAAVIYGIPRSTLRNKVYK). Disordered regions lie at residues 636 to 705 (ERDA…SGAE), 797 to 877 (RLSK…DSAQ), 962 to 1045 (GQTV…NYDR), 1082 to 1145 (ERHL…NGIK), 1248 to 1283 (ETSA…NGSF), and 1301 to 1598 (RAMT…SVEQ). Residues 653 to 687 (APATTITTITTTTTTTTTTTTTTTTPNTTQNASAT) show a composition bias toward low complexity. The span at 694–705 (DEVDDKELSGAE) shows a compositional bias: acidic residues. Residues 820 to 855 (THPQAQAQAQPQQQQQQQQQQPQQQQQQQQQQQQQQ) show a composition bias toward low complexity. Residues 965 to 975 (VSGGGMGGCQP) show a composition bias toward gly residues. Over residues 1003 to 1021 (ANAQQGQAQAQAKPQSQEA) the composition is skewed to low complexity. In terms of domain architecture, HTH psq-type 2 spans 1034 to 1086 (RPKRGKYRNYDRDSLVEAVRAVQRGEMSVHRAGSYYGVPHSTLEYKVKERHLM). Residues 1062 to 1082 (VHRAGSYYGVPHSTLEYKVKE) constitute a DNA-binding region (H-T-H motif). The segment covering 1093–1102 (QKQSDDKTKE) has biased composition (basic and acidic residues). Low complexity predominate over residues 1103-1120 (TSTVTAAAAATNIRPGTA). Residues 1309–1318 (QQQQASSQQQ) are compositionally biased toward low complexity. Basic and acidic residues-rich tracts occupy residues 1383–1392 (DRGRNDDGSD) and 1407–1442 (GSRD…DRKT). Over residues 1447–1466 (PQQPQQQQQQQQQQQQQQQQ) the composition is skewed to low complexity. A compositionally biased stretch (basic and acidic residues) spans 1481–1497 (TDKKSACDSKLIVDHSS). Residues 1501–1547 (QQQQPQQQQQQQQQQQPQQQSQQPQQQQPQPQQQQQQQQQQQPQQQQ) show a composition bias toward low complexity. The segment covering 1562 to 1577 (RGYNSGNNRSGEQANS) has biased composition (polar residues).

In terms of assembly, homodimer. Large-type Kenyon cells of mushroom body.

The protein resides in the nucleus. Functionally, transcriptional activator which binds to the consensus sequence 5'-CCCTATCGATCGATCTCTACCT-3'. May play a role in higher-order sensory processing. The chain is Mushroom body large-type Kenyon cell-specific protein 1 (Mblk-1) from Apis mellifera (Honeybee).